Consider the following 361-residue polypeptide: UDP-3-O-acylglucosamine N-acyltransferase (361 aa).

Residue His258 is the Proton acceptor of the active site.

The protein belongs to the transferase hexapeptide repeat family. LpxD subfamily. In terms of assembly, homotrimer.

The enzyme catalyses a UDP-3-O-[(3R)-3-hydroxyacyl]-alpha-D-glucosamine + a (3R)-hydroxyacyl-[ACP] = a UDP-2-N,3-O-bis[(3R)-3-hydroxyacyl]-alpha-D-glucosamine + holo-[ACP] + H(+). It participates in bacterial outer membrane biogenesis; LPS lipid A biosynthesis. In terms of biological role, catalyzes the N-acylation of UDP-3-O-acylglucosamine using 3-hydroxyacyl-ACP as the acyl donor. Is involved in the biosynthesis of lipid A, a phosphorylated glycolipid that anchors the lipopolysaccharide to the outer membrane of the cell. The protein is UDP-3-O-acylglucosamine N-acyltransferase of Nitrobacter hamburgensis (strain DSM 10229 / NCIMB 13809 / X14).